Reading from the N-terminus, the 417-residue chain is Tyrosine--tRNA ligase (417 aa).

Tyrosine 39 lines the L-tyrosine pocket. The 'HIGH' region motif lies at 44-53; sequence PTASSLHAGS. Residues tyrosine 176 and glutamine 180 each contribute to the L-tyrosine site. The 'KMSKS' region signature appears at 236-240; it reads KMGKS. Residue lysine 239 coordinates ATP. In terms of domain architecture, S4 RNA-binding spans 350–417; the sequence is AGLLALLVQA…KKKHVLIKPL (68 aa).

The protein belongs to the class-I aminoacyl-tRNA synthetase family. TyrS type 1 subfamily. In terms of assembly, homodimer.

The protein resides in the cytoplasm. The enzyme catalyses tRNA(Tyr) + L-tyrosine + ATP = L-tyrosyl-tRNA(Tyr) + AMP + diphosphate + H(+). In terms of biological role, catalyzes the attachment of tyrosine to tRNA(Tyr) in a two-step reaction: tyrosine is first activated by ATP to form Tyr-AMP and then transferred to the acceptor end of tRNA(Tyr). The sequence is that of Tyrosine--tRNA ligase from Bartonella quintana (strain Toulouse) (Rochalimaea quintana).